Here is a 297-residue protein sequence, read N- to C-terminus: F-actin-capping protein subunit beta (297 aa).

Residues 276–289 (DLSGKESDDKRQSE) show a composition bias toward basic and acidic residues. Positions 276 to 297 (DLSGKESDDKRQSELVKGLQSL) are disordered.

The protein belongs to the F-actin-capping protein beta subunit family. As to quaternary structure, component of the F-actin capping complex, composed of a heterodimer of an alpha and a beta subunit.

Its subcellular location is the cytoplasm. It localises to the cytoskeleton. It is found in the actin patch. Its function is as follows. F-actin-capping proteins bind in a Ca(2+)-independent manner to the fast growing ends of actin filaments (barbed end) thereby blocking the exchange of subunits at these ends. Unlike other capping proteins (such as gelsolin and severin), these proteins do not sever actin filaments. This chain is F-actin-capping protein subunit beta (CAP2), found in Debaryomyces hansenii (strain ATCC 36239 / CBS 767 / BCRC 21394 / JCM 1990 / NBRC 0083 / IGC 2968) (Yeast).